The following is a 421-amino-acid chain: D-amino acid dehydrogenase (421 aa).

Residue 3 to 17 (VTILGAGVIGVTSAY) participates in FAD binding.

This sequence belongs to the DadA oxidoreductase family. The cofactor is FAD.

It catalyses the reaction a D-alpha-amino acid + A + H2O = a 2-oxocarboxylate + AH2 + NH4(+). It participates in amino-acid degradation; D-alanine degradation; NH(3) and pyruvate from D-alanine: step 1/1. Oxidative deamination of D-amino acids. The sequence is that of D-amino acid dehydrogenase from Allorhizobium ampelinum (strain ATCC BAA-846 / DSM 112012 / S4) (Agrobacterium vitis (strain S4)).